A 470-amino-acid chain; its full sequence is MTRVERGRVLARAIERAVAHRASARRWTTTTRTPAWMVTGWMGGRGVDRSTAMTRFERCGSTASSKITAAPMVYVRGEEMTAYVMDLIRSRWIEPRVDVGGWETFDLRAKNRDDTEDRVLRDVIEAGKRIKAIFKEPTVTPTADQVKRLGLRKSWGSPNGAMRRGWNGITISRDTIHIDGVELGYKKPVLFERHAVGGEYSAGYKNVGKGKLTTTFTPSEGPDAGKTVVVDEREIVDEEAAVVTYHNPYDNVHDLARFFFGRCLEAKVTPYVVTKKTVFKWQEPFWQIMRTVFDEEFKAQFVAAGVMKEGEELVHLLSDAATMKLVQWRQGGFGMAAHNYDGDVLTDELAQVHKSPGFITSNLVGVHEDGTLIKEFEASHGTVADMDEARLRGEETSLNPLGMVEGLIGAMNHAADVHNIDRDRTHAFTTKMRTVIHQLFREGKGTRDLCGPSGLTTEQFIDAVAERLDA.

The N-terminal 26 residues, 1–26 (MTRVERGRVLARAIERAVAHRASARR), are a transit peptide targeting the mitochondrion. NAD(+) contacts are provided by residues 138–140 (TVT) and N159. D-threo-isocitrate-binding positions include 157 to 163 (SPNGAMR), R193, Y200, K275, and D319. D319 contacts Mg(2+). NAD(+) is bound at residue K324. Residue D343 participates in D-threo-isocitrate binding. Mg(2+) contacts are provided by D343 and D347. NAD(+) contacts are provided by residues 380–385 (HGTVAD) and N399.

The protein belongs to the isocitrate and isopropylmalate dehydrogenases family. Forms homodimers. Mg(2+) is required as a cofactor. It depends on Mn(2+) as a cofactor.

It localises to the mitochondrion. The enzyme catalyses D-threo-isocitrate + NAD(+) = 2-oxoglutarate + CO2 + NADH. The homodimer exhibits allosteric regulation by isocitrate. Functionally, performs an essential role in the oxidative function of the tricarboxylic acid cycle and respiration. Catalyzes the decarboxylation of isocitrate to produce 2-oxoglutarate and generate NADH to provide electrons for energy production. The protein is Isocitrate dehydrogenase (NAD(+)), mitochondrial of Ostreococcus tauri.